The following is a 275-amino-acid chain: 2,3,4,5-tetrahydropyridine-2,6-dicarboxylate N-succinyltransferase (275 aa).

Residues Arg-106 and Asp-143 each contribute to the substrate site.

The protein belongs to the transferase hexapeptide repeat family. In terms of assembly, homotrimer.

It localises to the cytoplasm. It carries out the reaction (S)-2,3,4,5-tetrahydrodipicolinate + succinyl-CoA + H2O = (S)-2-succinylamino-6-oxoheptanedioate + CoA. It participates in amino-acid biosynthesis; L-lysine biosynthesis via DAP pathway; LL-2,6-diaminopimelate from (S)-tetrahydrodipicolinate (succinylase route): step 1/3. This chain is 2,3,4,5-tetrahydropyridine-2,6-dicarboxylate N-succinyltransferase, found in Rickettsia bellii (strain RML369-C).